A 1132-amino-acid chain; its full sequence is SNF2 domain-containing protein CLASSY 4 (1132 aa).

Disordered regions lie at residues 24–104, 224–331, 376–396, and 525–544; these read NKSK…SKSF, LRGE…HHKK, DPVV…PRER, and PSVN…LPNR. Positions 47–54 match the Nuclear localization signal motif; that stretch reads KRRVNMRD. A compositionally biased stretch (basic and acidic residues) spans 81–90; the sequence is EYPEGKRDDE. Polar residues predominate over residues 92-103; it reads VGSTSGNLQSKS. Low complexity predominate over residues 233-242; the sequence is SDEVVSLSSS. Acidic residues predominate over residues 243–254; it reads SDDEEDPLEELG. A compositionally biased stretch (basic and acidic residues) spans 255–269; sequence TDSREEVSGEDRDSG. Composition is skewed to acidic residues over residues 270–282 and 291–309; these read ESDM…DSDS and DSSD…EDEE. Basic and acidic residues-rich tracts occupy residues 310–326, 376–392, and 525–539; these read GGTR…SEKV, DPVV…EHGK, and PSVN…RKGD. Residues 603 to 796 enclose the Helicase ATP-binding domain; it reads SVGVKGSGGC…SNVLCLARPA (194 aa). 616 to 623 serves as a coordination point for ATP; it reads HKAGTGKT. The DEAH box signature appears at 747–750; the sequence is DEGH. The Helicase C-terminal domain occupies 934–1087; sequence DFIRISGTVK…ELVFSSTNEK (154 aa).

The protein belongs to the SNF2/RAD54 helicase family. In terms of assembly, interacts with NRPD1.

It localises to the nucleus. Probable chromatin remodeling factor. The polypeptide is SNF2 domain-containing protein CLASSY 4 (CLSY4) (Arabidopsis thaliana (Mouse-ear cress)).